The primary structure comprises 656 residues: Protein NO VEIN-LIKE (656 aa).

Residues Asp283–Ala375 are disordered. Positions Glu299–Val308 are enriched in acidic residues. The span at Glu342 to Lys353 shows a compositional bias: basic and acidic residues. Basic residues predominate over residues Leu354 to Ile371.

The sequence is that of Protein NO VEIN-LIKE from Arabidopsis thaliana (Mouse-ear cress).